Consider the following 391-residue polypeptide: Alkanesulfonate monooxygenase (391 aa).

The protein belongs to the SsuD family.

It carries out the reaction an alkanesulfonate + FMNH2 + O2 = an aldehyde + FMN + sulfite + H2O + 2 H(+). Functionally, catalyzes the desulfonation of aliphatic sulfonates. The chain is Alkanesulfonate monooxygenase from Paracidovorax citrulli (strain AAC00-1) (Acidovorax citrulli).